The primary structure comprises 399 residues: Dual-specificity RNA methyltransferase RlmN (399 aa).

Glutamate 121 functions as the Proton acceptor in the catalytic mechanism. In terms of domain architecture, Radical SAM core spans 127-376 (DVDRGTLCVS…VRTPRGRDIL (250 aa)). A disulfide bridge connects residues cysteine 134 and cysteine 379. Residues cysteine 141, cysteine 145, and cysteine 148 each contribute to the [4Fe-4S] cluster site. Residues 205-206 (GE), serine 237, 259-261 (SLH), and asparagine 336 each bind S-adenosyl-L-methionine. Residue cysteine 379 is the S-methylcysteine intermediate of the active site.

It belongs to the radical SAM superfamily. RlmN family. [4Fe-4S] cluster is required as a cofactor.

The protein resides in the cytoplasm. It carries out the reaction adenosine(2503) in 23S rRNA + 2 reduced [2Fe-2S]-[ferredoxin] + 2 S-adenosyl-L-methionine = 2-methyladenosine(2503) in 23S rRNA + 5'-deoxyadenosine + L-methionine + 2 oxidized [2Fe-2S]-[ferredoxin] + S-adenosyl-L-homocysteine. The enzyme catalyses adenosine(37) in tRNA + 2 reduced [2Fe-2S]-[ferredoxin] + 2 S-adenosyl-L-methionine = 2-methyladenosine(37) in tRNA + 5'-deoxyadenosine + L-methionine + 2 oxidized [2Fe-2S]-[ferredoxin] + S-adenosyl-L-homocysteine. Specifically methylates position 2 of adenine 2503 in 23S rRNA and position 2 of adenine 37 in tRNAs. m2A2503 modification seems to play a crucial role in the proofreading step occurring at the peptidyl transferase center and thus would serve to optimize ribosomal fidelity. This Methylocella silvestris (strain DSM 15510 / CIP 108128 / LMG 27833 / NCIMB 13906 / BL2) protein is Dual-specificity RNA methyltransferase RlmN.